A 498-amino-acid chain; its full sequence is Glycerol kinase (498 aa).

T12 lines the ADP pocket. ATP-binding residues include T12, T13, and S14. T12 serves as a coordination point for sn-glycerol 3-phosphate. Residue R16 coordinates ADP. Sn-glycerol 3-phosphate-binding residues include R82, E83, Y134, and D244. Glycerol is bound by residues R82, E83, Y134, D244, and Q245. 2 residues coordinate ADP: T266 and G309. Positions 266, 309, 313, and 410 each coordinate ATP. Residues G410 and N414 each contribute to the ADP site.

This sequence belongs to the FGGY kinase family. As to quaternary structure, homotetramer and homodimer (in equilibrium).

It catalyses the reaction glycerol + ATP = sn-glycerol 3-phosphate + ADP + H(+). It participates in polyol metabolism; glycerol degradation via glycerol kinase pathway; sn-glycerol 3-phosphate from glycerol: step 1/1. Its activity is regulated as follows. Activated by phosphorylation and inhibited by fructose 1,6-bisphosphate (FBP). In terms of biological role, key enzyme in the regulation of glycerol uptake and metabolism. Catalyzes the phosphorylation of glycerol to yield sn-glycerol 3-phosphate. This is Glycerol kinase from Natranaerobius thermophilus (strain ATCC BAA-1301 / DSM 18059 / JW/NM-WN-LF).